A 70-amino-acid polypeptide reads, in one-letter code: uncharacterized protein (70 aa).

Residues 50 to 70 (INVVLVLIIALIIFILMLDGV) traverse the membrane as a helical segment.

The protein localises to the membrane. This is an uncharacterized protein from Dictyostelium discoideum (Social amoeba).